Consider the following 339-residue polypeptide: UDP-N-acetylenolpyruvoylglucosamine reductase (339 aa).

In terms of domain architecture, FAD-binding PCMH-type spans 19–189 (VDVRAQLFAE…LRVRFALNRV (171 aa)). Arg166 is an active-site residue. Ser239 functions as the Proton donor in the catalytic mechanism. Glu335 is a catalytic residue.

Belongs to the MurB family. FAD is required as a cofactor.

The protein localises to the cytoplasm. It carries out the reaction UDP-N-acetyl-alpha-D-muramate + NADP(+) = UDP-N-acetyl-3-O-(1-carboxyvinyl)-alpha-D-glucosamine + NADPH + H(+). Its pathway is cell wall biogenesis; peptidoglycan biosynthesis. Functionally, cell wall formation. This chain is UDP-N-acetylenolpyruvoylglucosamine reductase, found in Pseudomonas fluorescens (strain Pf0-1).